The following is a 120-amino-acid chain: UPF0231 protein Ent638_0667 (120 aa).

This sequence belongs to the UPF0231 family.

The protein is UPF0231 protein Ent638_0667 of Enterobacter sp. (strain 638).